The primary structure comprises 703 residues: Fibulin-1 (703 aa).

The first 29 residues, 1–29 (MERAAPSRRVPLPLLLLGGLALLAAGVDA), serve as a signal peptide directing secretion. Intrachain disulfides connect cysteine 36–cysteine 61, cysteine 37–cysteine 68, cysteine 50–cysteine 69, cysteine 78–cysteine 109, cysteine 91–cysteine 110, cysteine 112–cysteine 136, cysteine 113–cysteine 143, cysteine 126–cysteine 144, cysteine 180–cysteine 190, cysteine 186–cysteine 199, cysteine 201–cysteine 214, cysteine 220–cysteine 233, cysteine 227–cysteine 242, cysteine 248–cysteine 260, cysteine 266–cysteine 279, cysteine 273–cysteine 288, cysteine 294–cysteine 306, cysteine 312–cysteine 325, cysteine 319–cysteine 334, cysteine 341–cysteine 354, cysteine 360–cysteine 373, cysteine 367–cysteine 382, cysteine 384–cysteine 397, cysteine 403–cysteine 415, cysteine 411–cysteine 424, cysteine 426–cysteine 439, cysteine 445–cysteine 454, cysteine 450–cysteine 463, cysteine 465–cysteine 479, cysteine 485–cysteine 498, cysteine 494–cysteine 507, cysteine 509–cysteine 523, cysteine 529–cysteine 542, cysteine 536–cysteine 551, and cysteine 556–cysteine 577. Anaphylatoxin-like domains follow at residues 36 to 76 (CCAD…LEEL), 77 to 111 (HCATGISLANEQDRCATPHGDNASLEATFVKRCCH), and 112 to 144 (CCLLGRAAQAQGQSCEYSLMVGYQCGQVFQACC). Asparagine 98 carries an N-linked (GlcNAc...) (complex) asparagine glycan. The EGF-like 1 domain maps to 176 to 215 (LNDRCRGGGPCKQQCRDTGDEVVCSCFVGYQLLSDGVSCE). The 46-residue stretch at 216 to 261 (DVNECITGSHSCRLGESCINTVGSFRCQRDSSCGTGYELTEDNSCK) folds into the EGF-like 2; calcium-binding domain. The EGF-like 3; calcium-binding domain occupies 262 to 307 (DIDECESGIHNCLPDFICQNTLGSFRCRPKLQCKSGFIQDALGNCI). Residues 308–355 (DINECLSISAPCPIGHTCINTEGSYTCQKNVPNCGRGYHLNEEGTRCV) form the EGF-like 4; calcium-binding domain. In terms of domain architecture, EGF-like 5; calcium-binding spans 356-398 (DVDECAPPAEPCGKGHRCVNSPGSFRCECKTGYYFDGISRMCV). Residues 356–440 (DVDECAPPAE…RLSVDGRSCE (85 aa)) form a self-association and FN1-binding; calcium is necessary for homotypic binding, but not for heterotypic binding region. The EGF-like 6; calcium-binding domain maps to 399 to 440 (DVNECQRYPGRLCGHKCENTLGSYLCSCSVGFRLSVDGRSCE). An EGF-like 7; calcium-binding domain is found at 441–480 (DINECSSSPCSQECANVYGSYQCYCRRGYQLSDVDGVTCE). The EGF-like 8; calcium-binding domain occupies 481-524 (DIDECALPTGGHICSYRCINIPGSFQCSCPSSGYRLAPNGRNCQ). Residues 525–578 (DIDECVTGIHNCSINETCFNIQGGFRCLAFECPENYRRSAATLQQEKTDTVRCI) form the EGF-like 9; calcium-binding domain. 2 N-linked (GlcNAc...) asparagine glycosylation sites follow: asparagine 535 and asparagine 539.

This sequence belongs to the fibulin family. As to quaternary structure, homomultimerizes and interacts with various extracellular matrix components such as FN1, LAMA1, LAMA2, NID, ACAN, CSPG2 and type IV collagen. Also interacts with APP and FGB. Interacts with FBLN7. Interacts with CCN3. (Microbial infection) Interacts with human papillomavirus/HPV type 16, 18 and 31 proteins E6. In terms of tissue distribution, isoform A and isoform B are only expressed in placenta. Isoform C and isoform D are expressed in a variety of tissues and cultured cells.

The protein resides in the secreted. Its subcellular location is the extracellular space. The protein localises to the extracellular matrix. Functionally, incorporated into fibronectin-containing matrix fibers. May play a role in cell adhesion and migration along protein fibers within the extracellular matrix (ECM). Could be important for certain developmental processes and contribute to the supramolecular organization of ECM architecture, in particular to those of basement membranes. Has been implicated in a role in cellular transformation and tumor invasion, it appears to be a tumor suppressor. May play a role in haemostasis and thrombosis owing to its ability to bind fibrinogen and incorporate into clots. Could play a significant role in modulating the neurotrophic activities of APP, particularly soluble APP. This is Fibulin-1 (FBLN1) from Homo sapiens (Human).